The sequence spans 164 residues: Cyclic pyranopterin monophosphate synthase (164 aa).

Substrate is bound by residues 75 to 77 and 116 to 117; these read MCH and ME. The active site involves D131.

Belongs to the MoaC family. As to quaternary structure, homohexamer; trimer of dimers.

The catalysed reaction is (8S)-3',8-cyclo-7,8-dihydroguanosine 5'-triphosphate = cyclic pyranopterin phosphate + diphosphate. The protein operates within cofactor biosynthesis; molybdopterin biosynthesis. In terms of biological role, catalyzes the conversion of (8S)-3',8-cyclo-7,8-dihydroguanosine 5'-triphosphate to cyclic pyranopterin monophosphate (cPMP). This Staphylococcus aureus (strain USA300) protein is Cyclic pyranopterin monophosphate synthase.